A 993-amino-acid polypeptide reads, in one-letter code: NACHT, LRR and PYD domains-containing protein 14 (993 aa).

One can recognise an NACHT domain in the interval 81–403 (QTVVLQGAAG…FYLLRENLEE (323 aa)). 87-94 (GAAGIGKT) is an ATP binding site. 9 LRR repeats span residues 636-657 (DLKE…LKCK), 660-680 (KLRV…QKLS), 688-708 (SLVF…KSLC), 717-738 (SLER…VLSS), 745-765 (RLTH…KLLS), 774-795 (TLQS…HLST), 802-822 (SLVH…KLLC), 831-852 (NLQE…DLAS), and 859-879 (NLWS…NILC).

It belongs to the NLRP family. As to expression, detected in adult ovary and testis. Detected in oocytes and in germ cell elements in seminiferous tubules in adult testis (at protein level).

The protein resides in the cytoplasm. Functionally, may be involved in inflammation and spermatogenesis. The polypeptide is NACHT, LRR and PYD domains-containing protein 14 (Nlrp14) (Mus musculus (Mouse)).